We begin with the raw amino-acid sequence, 96 residues long: Putative pterin-4-alpha-carbinolamine dehydratase (96 aa).

The protein belongs to the pterin-4-alpha-carbinolamine dehydratase family.

It catalyses the reaction (4aS,6R)-4a-hydroxy-L-erythro-5,6,7,8-tetrahydrobiopterin = (6R)-L-erythro-6,7-dihydrobiopterin + H2O. This is Putative pterin-4-alpha-carbinolamine dehydratase from Prochlorococcus marinus (strain SARG / CCMP1375 / SS120).